The primary structure comprises 867 residues: DNA mismatch repair protein MutS (867 aa).

An ATP-binding site is contributed by 609 to 616 (GPNMSGKS).

It belongs to the DNA mismatch repair MutS family.

Its function is as follows. This protein is involved in the repair of mismatches in DNA. It is possible that it carries out the mismatch recognition step. This protein has a weak ATPase activity. The chain is DNA mismatch repair protein MutS from Latilactobacillus sakei subsp. sakei (strain 23K) (Lactobacillus sakei subsp. sakei).